We begin with the raw amino-acid sequence, 86 residues long: Large ribosomal subunit protein bL31m (86 aa).

The transit peptide at 1–18 (MKCSLRLFEKAGRLSVRS) directs the protein to the mitochondrion.

It belongs to the bacterial ribosomal protein bL31 family. Highly divergent. In terms of assembly, component of the mitochondrial large ribosomal subunit (mt-LSU). Mature yeast 74S mitochondrial ribosomes consist of a small (37S) and a large (54S) subunit. The 37S small subunit contains a 15S ribosomal RNA (15S mt-rRNA) and at least 32 different proteins. The 54S large subunit contains a 21S rRNA (21S mt-rRNA) and at least 45 different proteins.

It localises to the mitochondrion. In terms of biological role, component of the mitochondrial ribosome (mitoribosome), a dedicated translation machinery responsible for the synthesis of mitochondrial genome-encoded proteins, including at least some of the essential transmembrane subunits of the mitochondrial respiratory chain. The mitoribosomes are attached to the mitochondrial inner membrane and translation products are cotranslationally integrated into the membrane. This Schizosaccharomyces pombe (strain 972 / ATCC 24843) (Fission yeast) protein is Large ribosomal subunit protein bL31m (tam9).